The chain runs to 284 residues: Short chain dehydrogenase/reductase AacuD (284 aa).

NADP(+) is bound at residue Val-37. Catalysis depends on proton donor residues Ser-166 and Tyr-180. NADP(+) is bound by residues Tyr-180, Lys-184, and Thr-215. Lys-184 functions as the Lowers pKa of active site Tyr in the catalytic mechanism.

Belongs to the short-chain dehydrogenases/reductases (SDR) family.

It functions in the pathway secondary metabolite biosynthesis. In terms of biological role, short chain dehydrogenase/reductase; part of the gene cluster that mediates the biosynthesis of the tetrahydroxanthone dimer secalonic acid D. The pathway begins with the synthesis of atrochrysone thioester by the polyketide synthase AacuL. The atrochrysone carboxyl ACP thioesterase AacuM then breaks the thioester bond and releases the atrochrysone carboxylic acid from AacuL. Atrochrysone carboxylic acid is decarboxylated by the decarboxylase AacuI, and oxidized by the anthrone oxygenase AacuG to yield emodin. Emodin is then reduced to emodin hydroquinone by a yet unidentified oxidoreductase. A-ring reduction by the short chain dehydrogenase AacuN, dehydration by the scytalone dehydratase-like protein AacuK and probable spontaneous re-oxidation, results in overall deoxygenation to chrysophanol. Baeyer-Villiger oxidation by the Baeyer-Villiger monooxygenase (BVMO) AacuH then yields monodictyphenone. Monodictyphenone is transformed into compounds with the tetrahydroxanthone skeleton via methylesterification by the methyltransferase AacuQ, followed by the action of the flavin-dependent monooxygenase AacuC, the isomerase AacuP, and the short chain dehydrogenase/reductase AacuF or AacuD. AacuF and AacuD should accept the same compound as a substrate but perform the ketoreduction with a different stereoselectivity, thus yielding blennolides B and A, respectively. In the final step of the biosynthesis, the cytochrome P450 monooxygenase AacuE accepts blennolide B and/or blennolide A to conduct the dimerization reaction to furnish the tetrahydroxanthone dimers, secalonic acids D, B, and F. This is Short chain dehydrogenase/reductase AacuD from Aspergillus aculeatus (strain ATCC 16872 / CBS 172.66 / WB 5094).